A 172-amino-acid polypeptide reads, in one-letter code: Epithelial membrane protein 2 (172 aa).

4 helical membrane-spanning segments follow: residues 1–21, 72–92, 100–120, and 148–168; these read MLVI…LLFI, TMIL…LQLF, FVLT…GASV, and FILA…YMIL.

It belongs to the PMP-22/EMP/MP20 family. Interacts with PTK2; regulates PTK2 activation and localization. Interacts with ITGB3; regulates the levels of the heterodimer ITGA5-ITGB3 integrin surface expression. Interacts with P2RX7 (via C-terminus). Interacts with ITGB1; the interaction may be direct or indirect and ITGB1 has a heterodimer form. In terms of tissue distribution, expressed in glomeruli.

It is found in the golgi apparatus membrane. Its subcellular location is the cell membrane. The protein localises to the apical cell membrane. The protein resides in the membrane raft. It localises to the cytoplasm. It is found in the nucleus. Its subcellular location is the perinuclear region. Functionally, functions as a key regulator of cell membrane composition by regulating protein surface expression. Also, plays a role in regulation of processes including cell migration, cell proliferation, cell contraction and cell adhesion. Regulates transepithelial migration of neutrophils into the alveolar lumen, potentially via mediation of cell surface expression of adhesion markers and lipid raft formation. Negatively regulates caveolae formation by reducing CAV1 expression and CAV1 amount by increasing lysosomal degradation. Facilitates surface trafficking and the formation of lipid rafts bearing GPI-anchor proteins. Regulates surface expression of MHC1 and ICAM1 proteins increasing susceptibility to T-cell mediated cytotoxicity. Regulates the plasma membrane expression of the integrin heterodimers ITGA6-ITGB1, ITGA5-ITGB3 and ITGA5-ITGB1 resulting in modulation of cell-matrix adhesion. Also regulates many processes through PTK2. Regulates blood vessel endothelial cell migration and angiogenesis by regulating VEGF protein expression through PTK2 activation. Regulates cell migration and cell contraction through PTK2 and SRC activation. Regulates focal adhesion density, F-actin conformation and cell adhesion capacity through interaction with PTK2. Positively regulates cell proliferation. Plays a role during cell death and cell blebbing. Promotes angiogenesis and vasculogenesis through induction of VEGFA via a HIF1A-dependent pathway. Also plays a role in embryo implantation by regulating surface trafficking of integrin heterodimer ITGA5-ITGB3. Plays a role in placental angiogenesis and uterine natural killer cell regulation at the maternal-fetal placental interface, however not required in the maternal tissues for a viable pregnancy. Involved in the early stages of embryogenic development and cardiogenesis, potentially via regulation of epithelial-mesenchymal transition timing. May play a role in glomerular filtration. The protein is Epithelial membrane protein 2 (Emp2) of Rattus norvegicus (Rat).